The sequence spans 304 residues: Murein tetrapeptide carboxypeptidase (304 aa).

Ser-106 (nucleophile) is an active-site residue. Residues Glu-200 and His-270 each act as charge relay system in the active site.

The protein belongs to the peptidase S66 family.

The protein resides in the cytoplasm. The catalysed reaction is N-acetyl-D-glucosaminyl-N-acetylmuramoyl-L-alanyl-meso-2,6-diaminoheptanedioyl-D-alanine + H2O = N-acetyl-D-glucosaminyl-N-acetylmuramoyl-L-alanyl-meso-2,6-diaminoheptanedioate + D-alanine. The protein operates within cell wall biogenesis; peptidoglycan recycling. Releases the terminal D-alanine residue from the cytoplasmic tetrapeptide recycling product L-Ala-gamma-D-Glu-meso-Dap-D-Ala. Can also cleave D-Ala from murein derivatives containing the tetrapeptide, i.e. MurNAc-tetrapeptide, UDP-MurNAc-tetrapeptide, GlcNAc-MurNAc-tetrapeptide, and GlcNAc-anhMurNAc-tetrapeptide. Does not act on murein sacculi or cross-linked muropeptides. The tripeptides produced by the LcdA reaction can then be reused as peptidoglycan building blocks; LcdA is thereby involved in murein recycling. The sequence is that of Murein tetrapeptide carboxypeptidase (ldcA) from Escherichia coli O6:H1 (strain CFT073 / ATCC 700928 / UPEC).